A 239-amino-acid chain; its full sequence is Small ribosomal subunit protein uS3 (239 aa).

A KH type-2 domain is found at 39-107 (IREFIKEECK…ELHLNIVEVR (69 aa)). Residues 212-221 (PQARDRKAQE) are compositionally biased toward basic and acidic residues. Residues 212–239 (PQARDRKAQELQDGPAPRGAGGNRRGDR) form a disordered region. Positions 230 to 239 (GAGGNRRGDR) are enriched in gly residues.

This sequence belongs to the universal ribosomal protein uS3 family. In terms of assembly, part of the 30S ribosomal subunit. Forms a tight complex with proteins S10 and S14.

Functionally, binds the lower part of the 30S subunit head. Binds mRNA in the 70S ribosome, positioning it for translation. The polypeptide is Small ribosomal subunit protein uS3 (Ruegeria sp. (strain TM1040) (Silicibacter sp.)).